Reading from the N-terminus, the 202-residue chain is uncharacterized protein (202 aa).

The tract at residues 118-202 (SSVSPVSSKK…KVSGTKKVKA (85 aa)) is disordered. Ser-121 carries the phosphoserine modification. Composition is skewed to basic residues over residues 142 to 163 (EKSKKKKEKKEKKDKLKKKSKR) and 186 to 202 (SSKSGLKKVSGTKKVKA).

The protein localises to the nucleus. Its subcellular location is the nucleolus. This is an uncharacterized protein from Schizosaccharomyces pombe (strain 972 / ATCC 24843) (Fission yeast).